The following is a 158-amino-acid chain: 6,7-dimethyl-8-ribityllumazine synthase (158 aa).

Residues Phe23, 61–63, and 85–87 each bind 5-amino-6-(D-ribitylamino)uracil; these read SFE and AVI. (2S)-2-hydroxy-3-oxobutyl phosphate is bound at residue 90–91; that stretch reads ET. Catalysis depends on His93, which acts as the Proton donor. Residue Phe118 coordinates 5-amino-6-(D-ribitylamino)uracil. Arg132 lines the (2S)-2-hydroxy-3-oxobutyl phosphate pocket.

It belongs to the DMRL synthase family.

It carries out the reaction (2S)-2-hydroxy-3-oxobutyl phosphate + 5-amino-6-(D-ribitylamino)uracil = 6,7-dimethyl-8-(1-D-ribityl)lumazine + phosphate + 2 H2O + H(+). It participates in cofactor biosynthesis; riboflavin biosynthesis; riboflavin from 2-hydroxy-3-oxobutyl phosphate and 5-amino-6-(D-ribitylamino)uracil: step 1/2. In terms of biological role, catalyzes the formation of 6,7-dimethyl-8-ribityllumazine by condensation of 5-amino-6-(D-ribitylamino)uracil with 3,4-dihydroxy-2-butanone 4-phosphate. This is the penultimate step in the biosynthesis of riboflavin. This is 6,7-dimethyl-8-ribityllumazine synthase from Prochlorococcus marinus (strain MIT 9215).